A 169-amino-acid polypeptide reads, in one-letter code: Protein pid-1 (169 aa).

Over residues S137–S151 the composition is skewed to polar residues. The disordered stretch occupies residues S137–A169.

Component of the pid-1 variant of the PETISCO complex (also called the pid-3, erh-2, tofu-6, and ife-3 small RNA complex) containing at least pid-1, tofu-6, ife-3, pid-3, and erh-2, which is required for the biogenesis of a class of 21 nucleotide PIWI-interacting RNAs (piRNAs) that possess a uracil residue at the 5'-end (also called 21U-RNAs). Within the complex interacts with pid-3; the interaction is direct. Within the complex interacts with erh-2. Within the complex interacts with tofu-6. As to expression, expressed predominantly in the germline (at protein level).

The protein resides in the cytoplasm. It localises to the nucleus. Its subcellular location is the perinuclear region. Its function is as follows. Component of the pid-1 variant of the PETISCO complex which is required for the biogenesis of a class of 21 nucleotide PIWI-interacting RNAs (piRNAs) that possess a uracil residue at the 5'-end (also called 21U-RNAs). Within the complex acts as an adapter which binds to the complex via erh-2. Involved in the biogenesis of 21U-RNAs which guide the piwi protein prg-1 to its DNA targets for silencing. Plays a role in small RNA-directed transgenerational epigenetic inheritance. The protein is Protein pid-1 of Caenorhabditis elegans.